A 202-amino-acid polypeptide reads, in one-letter code: Large ribosomal subunit protein bL25 (202 aa).

The protein belongs to the bacterial ribosomal protein bL25 family. CTC subfamily. In terms of assembly, part of the 50S ribosomal subunit; part of the 5S rRNA/L5/L18/L25 subcomplex. Contacts the 5S rRNA. Binds to the 5S rRNA independently of L5 and L18.

In terms of biological role, this is one of the proteins that binds to the 5S RNA in the ribosome where it forms part of the central protuberance. In Nitrosomonas eutropha (strain DSM 101675 / C91 / Nm57), this protein is Large ribosomal subunit protein bL25.